The following is a 176-amino-acid chain: Ribosome rescue factor SmrB (176 aa).

Residues 97–172 (LDMHGMTQQE…GDGALLVLLS (76 aa)) form the Smr domain.

It belongs to the SmrB family. In terms of assembly, associates with collided ribosomes, but not with correctly translating polysomes.

In terms of biological role, acts as a ribosome collision sensor. Detects stalled/collided disomes (pairs of ribosomes where the leading ribosome is stalled and a second ribosome has collided with it) and endonucleolytically cleaves mRNA at the 5' boundary of the stalled ribosome. Stalled/collided disomes form a new interface (primarily via the 30S subunits) that binds SmrB. Cleaved mRNA becomes available for tmRNA ligation, leading to ribosomal subunit dissociation and rescue of stalled ribosomes. The protein is Ribosome rescue factor SmrB of Vibrio vulnificus (strain CMCP6).